The primary structure comprises 296 residues: Probable AP endonuclease (296 aa).

A disulfide bridge links C16 with C20. Zn(2+) is bound by residues H78, H115, E142, H182, H218, D231, H233, and E271.

The protein belongs to the AP endonuclease 2 family. Zn(2+) serves as cofactor.

The protein resides in the host nucleus. Its subcellular location is the host cytoplasm. It localises to the virion. Endonuclease that plays a role in DNA repair. Cleaves phosphodiester bonds on the 5' side of apurinic or apyrimidinic sites (AP sites). In addition to endonuclease activity, the ASFV enzyme has a proofreading 3'-5' exonuclease activity that is considerably more efficient in the elimination of a mismatch than in that of a correctly paired base. Displays 3'-phosphatase and 3'-repair diesterase activities. The single nucleotide gaps generated by the AP endonuclease are filled by the viral AP endonuclease and DNA ligase. This Ornithodoros (relapsing fever ticks) protein is Probable AP endonuclease.